A 77-amino-acid chain; its full sequence is Translation initiation factor IF-1, chloroplastic (77 aa).

One can recognise an S1-like domain in the interval 1–71 (MKEQKLIHEG…TKGRIIYRLR (71 aa)).

This sequence belongs to the IF-1 family. Component of the 30S ribosomal translation pre-initiation complex which assembles on the 30S ribosome in the order IF-2 and IF-3, IF-1 and N-formylmethionyl-tRNA(fMet); mRNA recruitment can occur at any time during PIC assembly.

The protein resides in the plastid. Its subcellular location is the chloroplast. Its function is as follows. One of the essential components for the initiation of protein synthesis. Stabilizes the binding of IF-2 and IF-3 on the 30S subunit to which N-formylmethionyl-tRNA(fMet) subsequently binds. Helps modulate mRNA selection, yielding the 30S pre-initiation complex (PIC). Upon addition of the 50S ribosomal subunit IF-1, IF-2 and IF-3 are released leaving the mature 70S translation initiation complex. This is Translation initiation factor IF-1, chloroplastic from Drimys granadensis.